We begin with the raw amino-acid sequence, 228 residues long: U1 small nuclear ribonucleoprotein C-2 (228 aa).

The Matrin-type zinc-finger motif lies at 4–36; it reads YYCDYCDTYLTHDSPSVRKQHNAGYKHKANVRT. The segment at 105-228 is disordered; the sequence is PGVRPPILPA…SYALPSEGNH (124 aa). Composition is skewed to pro residues over residues 107 to 156 and 164 to 175; these read VRPP…PPGS and LPRPPTLPPPTS. A compositionally biased stretch (low complexity) spans 178 to 190; sequence PGAPIPNSAAPPA. Pro residues predominate over residues 196 to 214; sequence PPAPAGPTSGAPPAPPTAP.

Belongs to the U1 small nuclear ribonucleoprotein C family. In terms of assembly, U1 snRNP is composed of the 7 core Sm proteins B/B', D1, D2, D3, E, F and G that assemble in a heptameric protein ring on the Sm site of the small nuclear RNA to form the core snRNP, and at least 3 U1 snRNP-specific proteins U1-70K, U1-A and U1-C. U1-C interacts with U1 snRNA and the 5' splice-site region of the pre-mRNA.

Its subcellular location is the nucleus. Functionally, component of the spliceosomal U1 snRNP, which is essential for recognition of the pre-mRNA 5' splice-site and the subsequent assembly of the spliceosome. U1-C is directly involved in initial 5' splice-site recognition for both constitutive and regulated alternative splicing. The interaction with the 5' splice-site seems to precede base-pairing between the pre-mRNA and the U1 snRNA. Stimulates commitment or early (E) complex formation by stabilizing the base pairing of the 5' end of the U1 snRNA and the 5' splice-site region. The protein is U1 small nuclear ribonucleoprotein C-2 of Sorghum bicolor (Sorghum).